The primary structure comprises 652 residues: DNA ligase (652 aa).

Residues 29-33, 78-79, and E107 contribute to the NAD(+) site; these read DQEYD and SL. K109 functions as the N6-AMP-lysine intermediate in the catalytic mechanism. NAD(+)-binding residues include R130, E164, K278, and K302. Zn(2+) is bound by residues C395, C398, C413, and C418. The BRCT domain occupies 577 to 652; the sequence is DTSAQLFGLT…VKDENWLLQL (76 aa).

Belongs to the NAD-dependent DNA ligase family. LigA subfamily. Mg(2+) serves as cofactor. Requires Mn(2+) as cofactor.

The enzyme catalyses NAD(+) + (deoxyribonucleotide)n-3'-hydroxyl + 5'-phospho-(deoxyribonucleotide)m = (deoxyribonucleotide)n+m + AMP + beta-nicotinamide D-nucleotide.. Its function is as follows. DNA ligase that catalyzes the formation of phosphodiester linkages between 5'-phosphoryl and 3'-hydroxyl groups in double-stranded DNA using NAD as a coenzyme and as the energy source for the reaction. It is essential for DNA replication and repair of damaged DNA. This chain is DNA ligase, found in Streptococcus uberis (strain ATCC BAA-854 / 0140J).